The primary structure comprises 287 residues: tRNA-cytidine(32) 2-sulfurtransferase (287 aa).

The PP-loop motif motif lies at 58-63 (SGGKDS). The [4Fe-4S] cluster site is built by Cys-133, Cys-136, and Cys-224.

This sequence belongs to the TtcA family. As to quaternary structure, homodimer. It depends on Mg(2+) as a cofactor. [4Fe-4S] cluster serves as cofactor.

It is found in the cytoplasm. It carries out the reaction cytidine(32) in tRNA + S-sulfanyl-L-cysteinyl-[cysteine desulfurase] + AH2 + ATP = 2-thiocytidine(32) in tRNA + L-cysteinyl-[cysteine desulfurase] + A + AMP + diphosphate + H(+). The protein operates within tRNA modification. Its function is as follows. Catalyzes the ATP-dependent 2-thiolation of cytidine in position 32 of tRNA, to form 2-thiocytidine (s(2)C32). The sulfur atoms are provided by the cysteine/cysteine desulfurase (IscS) system. This Dinoroseobacter shibae (strain DSM 16493 / NCIMB 14021 / DFL 12) protein is tRNA-cytidine(32) 2-sulfurtransferase.